A 143-amino-acid chain; its full sequence is uncharacterized protein (143 aa).

The disordered stretch occupies residues 1–21 (MAAMDTGQRADPSNPGDKEGD).

This is an uncharacterized protein from Homo sapiens (Human).